Here is an 896-residue protein sequence, read N- to C-terminus: Protein translocase subunit SecA (896 aa).

ATP is bound by residues Q87, 105–109, and D512; that span reads GEGKT. Disordered stretches follow at residues 565-584 and 840-896; these read RRID…PGSS and EAAQ…AHEA. C876, C878, C887, and H888 together coordinate Zn(2+). Residues 882–896 are compositionally biased toward basic residues; it reads KKYKHCHGNRAAHEA.

This sequence belongs to the SecA family. Monomer and homodimer. Part of the essential Sec protein translocation apparatus which comprises SecA, SecYEG and auxiliary proteins SecDF-YajC and YidC. Zn(2+) is required as a cofactor.

Its subcellular location is the cell inner membrane. The protein localises to the cytoplasm. It catalyses the reaction ATP + H2O + cellular proteinSide 1 = ADP + phosphate + cellular proteinSide 2.. Its function is as follows. Part of the Sec protein translocase complex. Interacts with the SecYEG preprotein conducting channel. Has a central role in coupling the hydrolysis of ATP to the transfer of proteins into and across the cell membrane, serving both as a receptor for the preprotein-SecB complex and as an ATP-driven molecular motor driving the stepwise translocation of polypeptide chains across the membrane. The sequence is that of Protein translocase subunit SecA from Mannheimia succiniciproducens (strain KCTC 0769BP / MBEL55E).